An 896-amino-acid chain; its full sequence is Desmocollin-3 (896 aa).

An N-terminal signal peptide occupies residues 1-26 (MAAPGSGAPCAELCRQLLLTLVVFSF). Residues 27–134 (ACEACKKEIF…KETVLRRSKR (108 aa)) constitute a propeptide that is removed on maturation. 5 consecutive Cadherin domains span residues 135-242 (RWAP…HPIF), 243-354 (TEAV…LPTF), 355-471 (RQNA…GPEC), 472-579 (SPEV…EILQ), and 580-690 (DYLV…ILGK). The Extracellular portion of the chain corresponds to 135-690 (RWAPIPCSMQ…RRSADVILGK (556 aa)). The N-linked (GlcNAc...) asparagine glycan is linked to Asn165. N-linked (GlcNAc...) asparagine glycans are attached at residues Asn391, Asn546, and Asn629. The helical transmembrane segment at 691–711 (WAILAILLGIALLFSILLTLV) threads the bilayer. The Cytoplasmic segment spans residues 712–896 (CGIVSARNKK…AALAKTCTKR (185 aa)).

May form homodimers. Interacts with DSG1; there is evidence to suggest that the interaction promotes cell-cell adhesion of keratinocytes. As to expression, expressed in stratified epithelia only, such as the epidermis, tongue, esophagus and rumen (at protein level).

The protein localises to the cell membrane. It localises to the cell junction. The protein resides in the desmosome. Its subcellular location is the cytoplasm. A component of desmosome cell-cell junctions which are required for positive regulation of cellular adhesion. Required for cell-cell adhesion in the epidermis, as a result required for the maintenance of the dermal cohesion and the dermal barrier function. Required for cell-cell adhesion of epithelial cell layers surrounding the telogen hair club, as a result plays an important role in telogen hair shaft anchorage. Essential for successful completion of embryo compaction and embryo development. In Bos taurus (Bovine), this protein is Desmocollin-3 (DSC3).